Here is a 223-residue protein sequence, read N- to C-terminus: Deoxyribose-phosphate aldolase (223 aa).

Catalysis depends on Asp-92, which acts as the Proton donor/acceptor. Lys-154 functions as the Schiff-base intermediate with acetaldehyde in the catalytic mechanism. Lys-182 (proton donor/acceptor) is an active-site residue.

It belongs to the DeoC/FbaB aldolase family. DeoC type 1 subfamily.

It is found in the cytoplasm. It carries out the reaction 2-deoxy-D-ribose 5-phosphate = D-glyceraldehyde 3-phosphate + acetaldehyde. The protein operates within carbohydrate degradation; 2-deoxy-D-ribose 1-phosphate degradation; D-glyceraldehyde 3-phosphate and acetaldehyde from 2-deoxy-alpha-D-ribose 1-phosphate: step 2/2. In terms of biological role, catalyzes a reversible aldol reaction between acetaldehyde and D-glyceraldehyde 3-phosphate to generate 2-deoxy-D-ribose 5-phosphate. This Haemophilus influenzae (strain ATCC 51907 / DSM 11121 / KW20 / Rd) protein is Deoxyribose-phosphate aldolase.